The sequence spans 278 residues: 3-methyl-2-oxobutanoate hydroxymethyltransferase (278 aa).

The Mg(2+) site is built by aspartate 43 and aspartate 82. 3-methyl-2-oxobutanoate-binding positions include 43–44 (DS), aspartate 82, and lysine 112. Glutamate 114 serves as a coordination point for Mg(2+). Catalysis depends on glutamate 181, which acts as the Proton acceptor.

The protein belongs to the PanB family. In terms of assembly, homodecamer; pentamer of dimers. Mg(2+) is required as a cofactor.

Its subcellular location is the cytoplasm. It catalyses the reaction 3-methyl-2-oxobutanoate + (6R)-5,10-methylene-5,6,7,8-tetrahydrofolate + H2O = 2-dehydropantoate + (6S)-5,6,7,8-tetrahydrofolate. It participates in cofactor biosynthesis; (R)-pantothenate biosynthesis; (R)-pantoate from 3-methyl-2-oxobutanoate: step 1/2. Functionally, catalyzes the reversible reaction in which hydroxymethyl group from 5,10-methylenetetrahydrofolate is transferred onto alpha-ketoisovalerate to form ketopantoate. This is 3-methyl-2-oxobutanoate hydroxymethyltransferase from Bacillus cereus (strain G9842).